We begin with the raw amino-acid sequence, 107 residues long: Nucleoid-associated protein RT0857 (107 aa).

This sequence belongs to the YbaB/EbfC family. In terms of assembly, homodimer.

Its subcellular location is the cytoplasm. It localises to the nucleoid. Its function is as follows. Binds to DNA and alters its conformation. May be involved in regulation of gene expression, nucleoid organization and DNA protection. The polypeptide is Nucleoid-associated protein RT0857 (Rickettsia typhi (strain ATCC VR-144 / Wilmington)).